Here is a 486-residue protein sequence, read N- to C-terminus: MITTEIKRVKNHINGEWVESTGTEVEAVPNPATGKIIAYVPLSPKEDVERAVEAAKNAYETWSKVPVPNRSRMLYKYLQLLQENKDELSKIITLENGKTLKDASGEVQRGIEAVELATSAPNLMMGQALPNIAGGIDGSIWRYPLGVVAGITPFNFPMMIPLWMFPLAIACGNTFVLKTSERTPLLAERLVELFYEAGFPKGVLNLVQGGKEVVNSILENKEIQAVSFVGSEPVARYVYETGTKYGKRVQALAGAKNHAIVMPDCNLEKTVQGVIGSAFGSSGERCMACSVVAVLDEIADEFIDALVSETRKLKVGDGFHEENYVGPLIRESHKERVIGYINSGVADGASLLVDGRQIKEDVEGGYFVGATIFDGVNQNMKIWQDEIFAPVLSIVRVRDLEEGIQLTNQSKFANGAVIYTSSGKHAQTFRDHIDAGMIGVNVNVPAPMAFFAFAGNKASFYGDLGTNGKDGVQFYTRKKVVTERWF.

Residues Phe154, Lys178, Glu181, Arg182, and Ser231 each coordinate NAD(+). The Nucleophile role is filled by Cys286. Residue Glu386 coordinates NAD(+).

It belongs to the aldehyde dehydrogenase family. IolA subfamily. As to quaternary structure, homotetramer.

It carries out the reaction 3-oxopropanoate + NAD(+) + CoA + H2O = hydrogencarbonate + acetyl-CoA + NADH + H(+). The catalysed reaction is 2-methyl-3-oxopropanoate + NAD(+) + CoA + H2O = propanoyl-CoA + hydrogencarbonate + NADH + H(+). The protein operates within polyol metabolism; myo-inositol degradation into acetyl-CoA; acetyl-CoA from myo-inositol: step 7/7. Catalyzes the oxidation of malonate semialdehyde (MSA) and methylmalonate semialdehyde (MMSA) into acetyl-CoA and propanoyl-CoA, respectively. Is involved in a myo-inositol catabolic pathway. Bicarbonate, and not CO2, is the end-product of the enzymatic reaction. This is Malonate-semialdehyde dehydrogenase from Bacillus cytotoxicus (strain DSM 22905 / CIP 110041 / 391-98 / NVH 391-98).